A 1780-amino-acid chain; its full sequence is Chitin synthase Vb (1780 aa).

Residues Asn-133, Asn-153, Asn-629, Asn-644, Asn-655, and Asn-660 are each glycosylated (N-linked (GlcNAc...) asparagine). A run of 2 helical transmembrane segments spans residues 740–760 (AWIA…LKFI) and 776–796 (FVLF…IIGF). Positions 805 to 866 (NKAWNVKEVA…LSGMVMDNYF (62 aa)) constitute a Cytochrome b5 heme-binding domain. N-linked (GlcNAc...) asparagine glycans are attached at residues Asn-888 and Asn-1009. The helical transmembrane segment at 1046–1066 (LLLAFAIIICIVTAVKFLAAL) threads the bilayer. A glycan (N-linked (GlcNAc...) asparagine) is linked at Asn-1411. 3 helical membrane passes run 1442-1462 (LCGT…IYIL), 1469-1489 (IPYI…LIFI), and 1497-1517 (IGWM…LPLY). Asn-1524 carries an N-linked (GlcNAc...) asparagine glycan. The interval 1649–1691 (TGVHDMRSQSPYQDYPGQHPSVSNLRGQANLSPATGGGHSRSG) is disordered. Over residues 1668–1681 (PSVSNLRGQANLSP) the composition is skewed to polar residues. The 57-residue stretch at 1722-1778 (GPNDMAIVESIRSVLCEVDLDTVTKKQVRALVEQRLQTELVGERRTFMDRQIDHELE) folds into the DEK-C domain.

Belongs to the chitin synthase family. Class VII subfamily.

Its subcellular location is the cell membrane. The catalysed reaction is [(1-&gt;4)-N-acetyl-beta-D-glucosaminyl](n) + UDP-N-acetyl-alpha-D-glucosamine = [(1-&gt;4)-N-acetyl-beta-D-glucosaminyl](n+1) + UDP + H(+). Functionally, polymerizes chitin, a structural polymer of the cell wall and septum, by transferring the sugar moiety of UDP-GlcNAc to the non-reducing end of the growing chitin polymer. ChsV and chsVb do perform additive, but not redundant, functions in septum formation. Functions not only in the maintenance of cell wall integrity under different osmotic conditions but also in polarized cell wall synthesis. Plays an important role in the complex infection process of this fungus. The chain is Chitin synthase Vb from Fusarium oxysporum f. sp. lycopersici (strain 4287 / CBS 123668 / FGSC 9935 / NRRL 34936) (Fusarium vascular wilt of tomato).